Consider the following 77-residue polypeptide: Cell division topological specificity factor (77 aa).

Belongs to the MinE family.

Prevents the cell division inhibition by proteins MinC and MinD at internal division sites while permitting inhibition at polar sites. This ensures cell division at the proper site by restricting the formation of a division septum at the midpoint of the long axis of the cell. This chain is Cell division topological specificity factor, found in Helicobacter pylori (strain P12).